The chain runs to 259 residues: Thiazole synthase (259 aa).

The active-site Schiff-base intermediate with DXP is K99. 1-deoxy-D-xylulose 5-phosphate-binding positions include G160, 187 to 188 (AG), and 209 to 210 (NT).

This sequence belongs to the ThiG family. In terms of assembly, homotetramer. Forms heterodimers with either ThiH or ThiS.

Its subcellular location is the cytoplasm. The enzyme catalyses [ThiS sulfur-carrier protein]-C-terminal-Gly-aminoethanethioate + 2-iminoacetate + 1-deoxy-D-xylulose 5-phosphate = [ThiS sulfur-carrier protein]-C-terminal Gly-Gly + 2-[(2R,5Z)-2-carboxy-4-methylthiazol-5(2H)-ylidene]ethyl phosphate + 2 H2O + H(+). It functions in the pathway cofactor biosynthesis; thiamine diphosphate biosynthesis. Its function is as follows. Catalyzes the rearrangement of 1-deoxy-D-xylulose 5-phosphate (DXP) to produce the thiazole phosphate moiety of thiamine. Sulfur is provided by the thiocarboxylate moiety of the carrier protein ThiS. In vitro, sulfur can be provided by H(2)S. The chain is Thiazole synthase from Solibacter usitatus (strain Ellin6076).